The primary structure comprises 328 residues: Mitochondrial GTPase 1 (328 aa).

The 190-residue stretch at 10 to 199 (KTTLKRLRDS…MVDTPGIMLP (190 aa)) folds into the CP-type G domain. GTP contacts are provided by residues 57 to 60 (NKCD), 143 to 148 (NVGKSS), and glycine 195.

The protein belongs to the TRAFAC class YlqF/YawG GTPase family. MTG1 subfamily.

Its subcellular location is the mitochondrion inner membrane. Functionally, mitochondrial GTPase involved in assembly of the large ribosomal subunit. Plays a role in expression of the mitochondrial translational machinery. In Schizosaccharomyces japonicus (strain yFS275 / FY16936) (Fission yeast), this protein is Mitochondrial GTPase 1.